The sequence spans 338 residues: tRNA N6-adenosine threonylcarbamoyltransferase (338 aa).

Residues His-111 and His-115 each coordinate Fe cation. Residues Leu-134–Gly-138, Asp-167, Gly-180, and Asn-272 each bind substrate. Asp-300 serves as a coordination point for Fe cation.

This sequence belongs to the KAE1 / TsaD family. The cofactor is Fe(2+).

The protein localises to the cytoplasm. It carries out the reaction L-threonylcarbamoyladenylate + adenosine(37) in tRNA = N(6)-L-threonylcarbamoyladenosine(37) in tRNA + AMP + H(+). Functionally, required for the formation of a threonylcarbamoyl group on adenosine at position 37 (t(6)A37) in tRNAs that read codons beginning with adenine. Is involved in the transfer of the threonylcarbamoyl moiety of threonylcarbamoyl-AMP (TC-AMP) to the N6 group of A37, together with TsaE and TsaB. TsaD likely plays a direct catalytic role in this reaction. This chain is tRNA N6-adenosine threonylcarbamoyltransferase, found in Vibrio parahaemolyticus serotype O3:K6 (strain RIMD 2210633).